The sequence spans 622 residues: Polypeptide N-acetylgalactosaminyltransferase 18 (622 aa).

At 1–12 (MVCTRKTKTLVS) the chain is on the cytoplasmic side. A helical; Signal-anchor for type II membrane protein transmembrane segment spans residues 13–35 (TCVILSGMTNIICLLYVGWVTNY). The Lumenal portion of the chain corresponds to 36 to 622 (IASVYVRGQE…ITNVLRSLVS (587 aa)). Cystine bridges form between C144–C392, C383–C462, C497–C513, C545–C558, and C586–C606. An N-linked (GlcNAc...) asparagine glycan is attached at N146. Residues 153 to 267 (LPEVSIVFIF…VGWAEPVLTR (115 aa)) form a catalytic subdomain A region. D194 is a binding site for substrate. N195 carries N-linked (GlcNAc...) asparagine glycosylation. Mn(2+)-binding residues include D251 and H253. N-linked (GlcNAc...) asparagine glycosylation is present at N320. The interval 324-400 (PIRSPALIGC…PCSRIAHIER (77 aa)) is catalytic subdomain B. Residue H397 participates in Mn(2+) binding. Substrate is bound by residues R400 and Y405. Residues 484 to 614 (AYGVLQNSLK…KCSGQHWTIT (131 aa)) form the Ricin B-type lectin domain.

It belongs to the glycosyltransferase 2 family. GalNAc-T subfamily. It depends on Mn(2+) as a cofactor.

The protein resides in the golgi apparatus membrane. It carries out the reaction L-seryl-[protein] + UDP-N-acetyl-alpha-D-galactosamine = a 3-O-[N-acetyl-alpha-D-galactosaminyl]-L-seryl-[protein] + UDP + H(+). It catalyses the reaction L-threonyl-[protein] + UDP-N-acetyl-alpha-D-galactosamine = a 3-O-[N-acetyl-alpha-D-galactosaminyl]-L-threonyl-[protein] + UDP + H(+). The protein operates within protein modification; protein glycosylation. Functionally, catalyzes the initial reaction in O-linked oligosaccharide biosynthesis, the transfer of an N-acetyl-D-galactosamine (GalNAc) residue from UDP-GalNAc to a serine or threonine residue on the protein receptor. This Mus musculus (Mouse) protein is Polypeptide N-acetylgalactosaminyltransferase 18 (Galnt18).